The primary structure comprises 691 residues: Glycine--tRNA ligase beta subunit (691 aa).

It belongs to the class-II aminoacyl-tRNA synthetase family. Tetramer of two alpha and two beta subunits.

It localises to the cytoplasm. It catalyses the reaction tRNA(Gly) + glycine + ATP = glycyl-tRNA(Gly) + AMP + diphosphate. The protein is Glycine--tRNA ligase beta subunit of Buchnera aphidicola subsp. Schizaphis graminum (strain Sg).